The following is a 105-amino-acid chain: Large ribosomal subunit protein uL24 (105 aa).

This sequence belongs to the universal ribosomal protein uL24 family. Part of the 50S ribosomal subunit.

Functionally, one of two assembly initiator proteins, it binds directly to the 5'-end of the 23S rRNA, where it nucleates assembly of the 50S subunit. Its function is as follows. One of the proteins that surrounds the polypeptide exit tunnel on the outside of the subunit. This chain is Large ribosomal subunit protein uL24, found in Psychrobacter sp. (strain PRwf-1).